We begin with the raw amino-acid sequence, 469 residues long: Argininosuccinate lyase (469 aa).

This sequence belongs to the lyase 1 family. Argininosuccinate lyase subfamily.

The protein resides in the cytoplasm. It carries out the reaction 2-(N(omega)-L-arginino)succinate = fumarate + L-arginine. It participates in amino-acid biosynthesis; L-arginine biosynthesis; L-arginine from L-ornithine and carbamoyl phosphate: step 3/3. This Burkholderia cenocepacia (strain HI2424) protein is Argininosuccinate lyase.